The following is a 529-amino-acid chain: Peptide chain release factor 3 (529 aa).

The tr-type G domain occupies 11-280 (NKRRTFAIIS…GLTKWAPTPL (270 aa)). GTP-binding positions include 20 to 27 (SHPDAGKT), 88 to 92 (DTPGH), and 142 to 145 (NKCD).

The protein belongs to the TRAFAC class translation factor GTPase superfamily. Classic translation factor GTPase family. PrfC subfamily.

The protein resides in the cytoplasm. Its function is as follows. Increases the formation of ribosomal termination complexes and stimulates activities of RF-1 and RF-2. It binds guanine nucleotides and has strong preference for UGA stop codons. It may interact directly with the ribosome. The stimulation of RF-1 and RF-2 is significantly reduced by GTP and GDP, but not by GMP. The protein is Peptide chain release factor 3 of Pseudoalteromonas translucida (strain TAC 125).